A 300-amino-acid chain; its full sequence is Tyrosine phosphatase-like protein J1 (300 aa).

A Tyrosine-protein phosphatase domain is found at 27-294 (LKREHEHIMQ…IFCYFTVLQF (268 aa)).

Belongs to the protein-tyrosine phosphatase family.

The polypeptide is Tyrosine phosphatase-like protein J1 (J1) (Microplitis demolitor (Parasitoid wasp)).